We begin with the raw amino-acid sequence, 475 residues long: Cobyric acid synthase (475 aa).

One can recognise a GATase cobBQ-type domain in the interval 244–431 (KLNVVVPVLT…LHGFFDEADV (188 aa)). Catalysis depends on cysteine 325, which acts as the Nucleophile. Histidine 423 is an active-site residue.

This sequence belongs to the CobB/CobQ family. CobQ subfamily.

It participates in cofactor biosynthesis; adenosylcobalamin biosynthesis. Catalyzes amidations at positions B, D, E, and G on adenosylcobyrinic A,C-diamide. NH(2) groups are provided by glutamine, and one molecule of ATP is hydrogenolyzed for each amidation. The protein is Cobyric acid synthase of Vibrio campbellii (strain ATCC BAA-1116).